The primary structure comprises 157 residues: Putative pre-16S rRNA nuclease (157 aa).

The protein belongs to the YqgF nuclease family.

The protein localises to the cytoplasm. Functionally, could be a nuclease involved in processing of the 5'-end of pre-16S rRNA. The polypeptide is Putative pre-16S rRNA nuclease (Nitrosomonas eutropha (strain DSM 101675 / C91 / Nm57)).